The primary structure comprises 339 residues: Biotin synthase (339 aa).

The 228-residue stretch at 55–282 folds into the Radical SAM core domain; sequence NAVQLSTLLS…KAVVRLSAGR (228 aa). The [4Fe-4S] cluster site is built by Cys70, Cys74, and Cys77. Positions 114, 145, 205, and 277 each coordinate [2Fe-2S] cluster.

It belongs to the radical SAM superfamily. Biotin synthase family. As to quaternary structure, homodimer. [4Fe-4S] cluster serves as cofactor. It depends on [2Fe-2S] cluster as a cofactor.

The enzyme catalyses (4R,5S)-dethiobiotin + (sulfur carrier)-SH + 2 reduced [2Fe-2S]-[ferredoxin] + 2 S-adenosyl-L-methionine = (sulfur carrier)-H + biotin + 2 5'-deoxyadenosine + 2 L-methionine + 2 oxidized [2Fe-2S]-[ferredoxin]. Its pathway is cofactor biosynthesis; biotin biosynthesis; biotin from 7,8-diaminononanoate: step 2/2. Its function is as follows. Catalyzes the conversion of dethiobiotin (DTB) to biotin by the insertion of a sulfur atom into dethiobiotin via a radical-based mechanism. This chain is Biotin synthase, found in Burkholderia ambifaria (strain ATCC BAA-244 / DSM 16087 / CCUG 44356 / LMG 19182 / AMMD) (Burkholderia cepacia (strain AMMD)).